A 204-amino-acid polypeptide reads, in one-letter code: MGAYKYMQELWRKKQSDVMRFLLRVRCWQYRQLSALHRAPRATRPDKARRLGYKAKQGYVIYRVRVRRGGRKRPVPKGATYGKPVHHGVNQLKFARSLQSIAEERAGRHCGGLRVLNSYWVGEDSTYKFFEVILIDTFHKAIRRNPDMQWITKAVHKHREMRGLTSAGKKSRGLGKGHKFHLTIGGSRRAAWRRRNTLQLHRYR.

It belongs to the eukaryotic ribosomal protein eL15 family. As to quaternary structure, component of the large ribosomal subunit.

The protein resides in the cytoplasm. Functionally, component of the large ribosomal subunit. The ribosome is a large ribonucleoprotein complex responsible for the synthesis of proteins in the cell. This is Large ribosomal subunit protein eL15 (rpl15) from Silurus asotus (Amur catfish).